The sequence spans 125 residues: Glycine cleavage system H protein (125 aa).

One can recognise a Lipoyl-binding domain in the interval 19 to 101 (IATIGITDYA…MGDGWFIKLR (83 aa)). At Lys-60 the chain carries N6-lipoyllysine.

This sequence belongs to the GcvH family. The glycine cleavage system is composed of four proteins: P, T, L and H. (R)-lipoate serves as cofactor.

In terms of biological role, the glycine cleavage system catalyzes the degradation of glycine. The H protein shuttles the methylamine group of glycine from the P protein to the T protein. The protein is Glycine cleavage system H protein of Parvibaculum lavamentivorans (strain DS-1 / DSM 13023 / NCIMB 13966).